A 245-amino-acid polypeptide reads, in one-letter code: 3-deoxy-manno-octulosonate cytidylyltransferase (245 aa).

Belongs to the KdsB family.

It is found in the cytoplasm. It catalyses the reaction 3-deoxy-alpha-D-manno-oct-2-ulosonate + CTP = CMP-3-deoxy-beta-D-manno-octulosonate + diphosphate. It functions in the pathway nucleotide-sugar biosynthesis; CMP-3-deoxy-D-manno-octulosonate biosynthesis; CMP-3-deoxy-D-manno-octulosonate from 3-deoxy-D-manno-octulosonate and CTP: step 1/1. Its pathway is bacterial outer membrane biogenesis; lipopolysaccharide biosynthesis. In terms of biological role, activates KDO (a required 8-carbon sugar) for incorporation into bacterial lipopolysaccharide in Gram-negative bacteria. This chain is 3-deoxy-manno-octulosonate cytidylyltransferase, found in Acidobacterium capsulatum (strain ATCC 51196 / DSM 11244 / BCRC 80197 / JCM 7670 / NBRC 15755 / NCIMB 13165 / 161).